A 293-amino-acid chain; its full sequence is Proline iminopeptidase (293 aa).

In terms of domain architecture, AB hydrolase-1 spans 28–277; sequence KPLVLLHGGP…FSRHMPFVEE (250 aa). Catalysis depends on Ser-104, which acts as the Nucleophile. Residue Asp-244 is part of the active site. Catalysis depends on His-271, which acts as the Proton donor.

This sequence belongs to the peptidase S33 family.

The enzyme catalyses Release of N-terminal proline from a peptide.. Its function is as follows. Releases the N-terminal proline from various substrates. In Clostridium botulinum (strain Hall / ATCC 3502 / NCTC 13319 / Type A), this protein is Proline iminopeptidase.